The sequence spans 97 residues: Plastocyanin A/B (97 aa).

Positions 1 to 97 (AEVKLGSDDG…AGMKGEVTVN (97 aa)) constitute a Plastocyanin-like domain. Cu cation is bound by residues His-37, Cys-82, His-85, and Met-90.

It belongs to the plastocyanin family. The cofactor is Cu(2+).

It is found in the plastid. The protein resides in the chloroplast thylakoid membrane. Its function is as follows. Participates in electron transfer between P700 and the cytochrome b6-f complex in photosystem I. In Petroselinum crispum (Parsley), this protein is Plastocyanin A/B (PETE).